The sequence spans 310 residues: Methionyl-tRNA formyltransferase (310 aa).

(6S)-5,6,7,8-tetrahydrofolate is bound at residue 112 to 115 (SLLP).

Belongs to the Fmt family.

The enzyme catalyses L-methionyl-tRNA(fMet) + (6R)-10-formyltetrahydrofolate = N-formyl-L-methionyl-tRNA(fMet) + (6S)-5,6,7,8-tetrahydrofolate + H(+). In terms of biological role, attaches a formyl group to the free amino group of methionyl-tRNA(fMet). The formyl group appears to play a dual role in the initiator identity of N-formylmethionyl-tRNA by promoting its recognition by IF2 and preventing the misappropriation of this tRNA by the elongation apparatus. This is Methionyl-tRNA formyltransferase from Pelagibacter ubique (strain HTCC1062).